We begin with the raw amino-acid sequence, 271 residues long: Peroxisomal biogenesis factor 2 (271 aa).

Over 1–2 (MS) the chain is Peroxisomal matrix. A helical transmembrane segment spans residues 3–29 (RVAQLDSIALDKELYGQFWSEFNAAFN). The Cytoplasmic portion of the chain corresponds to 30 to 33 (TSEH). Residues 34–60 (KEEWELALNTVVFMCATRFLPHYGSSC) form a helical membrane-spanning segment. The Peroxisomal matrix segment spans residues 61 to 77 (TYGSALSGVVFQCRKRT). The helical transmembrane segment at 78–97 (LYVVTVLAGYVWKKITHIIF) threads the bilayer. Over 98-101 (NGPH) the chain is Cytoplasmic. The chain crosses the membrane as a helical span at residues 102–133 (CGNQMMWLKLYKWVNLLYHGCDVTNFLRFLAA). Over 134-175 (EGPNARAFLSPLYRAFNVHSTRLIRDGSAIASEFYSNSVFAG) the chain is Peroxisomal matrix. The helical transmembrane segment at 176-197 (LEYQNRQLLWNALLELFSNTLL) threads the bilayer. At 198–271 (TKRGLLTFVK…SGRLTASPVY (74 aa)) the chain is on the cytoplasmic side. Zn(2+)-binding residues include Cys222, Cys225, Cys237, Cys238, Cys243, Cys246, Cys256, and Cys259. The RING-type zinc finger occupies 222 to 259 (CPRCGGFPTNPYQIACCRANYCYVCVVKALEWSMCDAC).

It belongs to the pex2/pex10/pex12 family. In terms of assembly, component of the PEX2-PEX10-PEX12 retrotranslocation channel, composed of PEX2, PEX10 and PEX12.

It is found in the peroxisome membrane. It carries out the reaction [E2 ubiquitin-conjugating enzyme]-S-ubiquitinyl-L-cysteine + [acceptor protein]-L-cysteine = [E2 ubiquitin-conjugating enzyme]-L-cysteine + [acceptor protein]-S-ubiquitinyl-L-cysteine.. It participates in protein modification; protein ubiquitination. Its function is as follows. E3 ubiquitin-protein ligase component of a retrotranslocation channel required for peroxisome organization by mediating export of the PEX5 receptor from peroxisomes to the cytosol, thereby promoting PEX5 recycling. The retrotranslocation channel is composed of PEX2, PEX10 and PEX12; each subunit contributing transmembrane segments that coassemble into an open channel that specifically allows the passage of PEX5 through the peroxisomal membrane. PEX2 also regulates peroxisome organization by acting as a E3 ubiquitin-protein ligase. PEX2 ubiquitinates PEX5 during its passage through the retrotranslocation channel: catalyzes monoubiquitination of PEX5 at 'Cys-6', a modification that acts as a signal for PEX5 extraction into the cytosol. In Saccharomyces cerevisiae (strain ATCC 204508 / S288c) (Baker's yeast), this protein is Peroxisomal biogenesis factor 2.